The sequence spans 389 residues: Lipid-A-disaccharide synthase (389 aa).

This sequence belongs to the LpxB family.

It catalyses the reaction a lipid X + a UDP-2-N,3-O-bis[(3R)-3-hydroxyacyl]-alpha-D-glucosamine = a lipid A disaccharide + UDP + H(+). It participates in bacterial outer membrane biogenesis; LPS lipid A biosynthesis. Condensation of UDP-2,3-diacylglucosamine and 2,3-diacylglucosamine-1-phosphate to form lipid A disaccharide, a precursor of lipid A, a phosphorylated glycolipid that anchors the lipopolysaccharide to the outer membrane of the cell. This is Lipid-A-disaccharide synthase from Verminephrobacter eiseniae (strain EF01-2).